Here is a 279-residue protein sequence, read N- to C-terminus: Ribosomal RNA large subunit methyltransferase E (279 aa).

The segment covering 1–10 (MSDDDQKPED) has biased composition (basic and acidic residues). Residues 1–66 (MSDDDQKPED…MKKGGDARAA (66 aa)) form a disordered region. Positions 136, 138, 154, 170, and 194 each coordinate S-adenosyl-L-methionine. Lys234 serves as the catalytic Proton acceptor.

It belongs to the class I-like SAM-binding methyltransferase superfamily. RNA methyltransferase RlmE family.

Its subcellular location is the cytoplasm. It catalyses the reaction uridine(2552) in 23S rRNA + S-adenosyl-L-methionine = 2'-O-methyluridine(2552) in 23S rRNA + S-adenosyl-L-homocysteine + H(+). In terms of biological role, specifically methylates the uridine in position 2552 of 23S rRNA at the 2'-O position of the ribose in the fully assembled 50S ribosomal subunit. The protein is Ribosomal RNA large subunit methyltransferase E of Maricaulis maris (strain MCS10) (Caulobacter maris).